The sequence spans 334 residues: Ornithine carbamoyltransferase (334 aa).

Residues 57 to 60 (STRT), Gln84, Arg108, and 135 to 138 (HPTQ) each bind carbamoyl phosphate. L-ornithine contacts are provided by residues Asn168, Asp232, and 236–237 (SM). Residues 274–275 (CL) and Arg321 contribute to the carbamoyl phosphate site.

It belongs to the aspartate/ornithine carbamoyltransferase superfamily. OTCase family.

Its subcellular location is the cytoplasm. It carries out the reaction carbamoyl phosphate + L-ornithine = L-citrulline + phosphate + H(+). Its pathway is amino-acid degradation; L-arginine degradation via ADI pathway; carbamoyl phosphate from L-arginine: step 2/2. Functionally, reversibly catalyzes the transfer of the carbamoyl group from carbamoyl phosphate (CP) to the N(epsilon) atom of ornithine (ORN) to produce L-citrulline. This Haemophilus influenzae (strain PittGG) protein is Ornithine carbamoyltransferase.